Consider the following 571-residue polypeptide: Leiomodin-3 (571 aa).

3 disordered regions span residues 1–29 (MSGH…NLSP), 46–67 (PHLP…GNFN), and 91–228 (PVSF…AKLD). Residues 10-23 (QEDTLSEELDEDEL) are compositionally biased toward acidic residues. Positions 94-105 (FVQSEKNTQNQR) are enriched in polar residues. Positions 119–134 (LKEKLNSEILAKKRES) are enriched in basic and acidic residues. Acidic residues predominate over residues 142 to 179 (EAEDDDEDEEEEEEDDEDEEEEEEDEEDDEGEEDEDGE). Positions 180 to 192 (QANREKNDAKEQI) are enriched in basic and acidic residues. Residues 193-204 (HNNPGTYQQLAT) are compositionally biased toward polar residues. The span at 206–228 (TAHEQKDTSETKEKGEKKIAKLD) shows a compositional bias: basic and acidic residues. The stretch at 397-436 (VTNLLTRNQDKRRQKRQEEQQQQQLKEQRKLIAMLENGLG) forms a coiled coil. The WH2 domain occupies 545 to 564 (PRDQLLNDIRHSNVAYLKPV).

This sequence belongs to the tropomodulin family. In terms of assembly, may interact with tropomyosin alpha (TPM1/2) N-terminus. Interacts with KLHL40; leading to stabilization. In terms of processing, ubiquitinated, leading to its degradation. Interaction with KLHL40 negatively regulates ubiquitination and degradation. As to expression, skeletal muscle and heart-specific (at protein level).

The protein resides in the cytoplasm. The protein localises to the myofibril. Its subcellular location is the sarcomere. It is found in the a band. It localises to the m line. The protein resides in the cytoskeleton. Its function is as follows. Essential for the organization of sarcomeric actin thin filaments in skeletal muscle. Increases the rate of actin polymerization. The chain is Leiomodin-3 from Mus musculus (Mouse).